A 704-amino-acid polypeptide reads, in one-letter code: Low calcium response locus protein D (704 aa).

A run of 7 helical transmembrane segments spans residues 18–35 (IMLA…VLPL), 42–61 (ILIA…AIYI), 108–132 (FVVG…FLVI), 200–220 (AIAG…IGVT), 235–259 (ILTV…GIIV), 278–297 (VVAQ…LFGL), and 304–320 (VTFL…GYML).

It belongs to the FHIPEP (flagella/HR/invasion proteins export pore) family.

The protein resides in the cell inner membrane. Could be involved in the secretion of the yop virulence proteins. This Yersinia pestis protein is Low calcium response locus protein D (lcrD).